Here is a 100-residue protein sequence, read N- to C-terminus: Putative pterin-4-alpha-carbinolamine dehydratase (100 aa).

Belongs to the pterin-4-alpha-carbinolamine dehydratase family.

The enzyme catalyses (4aS,6R)-4a-hydroxy-L-erythro-5,6,7,8-tetrahydrobiopterin = (6R)-L-erythro-6,7-dihydrobiopterin + H2O. The sequence is that of Putative pterin-4-alpha-carbinolamine dehydratase from Afipia carboxidovorans (strain ATCC 49405 / DSM 1227 / KCTC 32145 / OM5) (Oligotropha carboxidovorans).